A 491-amino-acid polypeptide reads, in one-letter code: Glucose-6-phosphate 1-dehydrogenase (491 aa).

NADP(+)-binding positions include Arg-49, 91–92 (DV), and Lys-146. Residues His-176, Lys-180, Glu-214, and Asp-233 each coordinate substrate. The active-site Proton acceptor is the His-238. Substrate contacts are provided by Lys-338 and Lys-343.

This sequence belongs to the glucose-6-phosphate dehydrogenase family.

The enzyme catalyses D-glucose 6-phosphate + NADP(+) = 6-phospho-D-glucono-1,5-lactone + NADPH + H(+). Its pathway is carbohydrate degradation; pentose phosphate pathway; D-ribulose 5-phosphate from D-glucose 6-phosphate (oxidative stage): step 1/3. In terms of biological role, catalyzes the oxidation of glucose 6-phosphate to 6-phosphogluconolactone. The chain is Glucose-6-phosphate 1-dehydrogenase from Buchnera aphidicola subsp. Acyrthosiphon pisum (strain APS) (Acyrthosiphon pisum symbiotic bacterium).